A 129-amino-acid polypeptide reads, in one-letter code: Putative reactive intermediate deaminase TdcF (129 aa).

An N6-(pyridoxal phosphate)lysine modification is found at Lys-58. Substrate is bound by residues Arg-105 to Cys-107 and Glu-120.

The protein belongs to the RutC family. As to quaternary structure, homotrimer.

It participates in amino-acid degradation; L-threonine degradation via propanoate pathway. Its function is as follows. May be a post-translational regulator that controls the metabolic fate of L-threonine or the potentially toxic intermediate 2-ketobutyrate. This is Putative reactive intermediate deaminase TdcF (tdcF) from Escherichia coli O6:H1 (strain CFT073 / ATCC 700928 / UPEC).